A 546-amino-acid polypeptide reads, in one-letter code: Calcitonin receptor-like protein 1 (546 aa).

Residues 1–171 (MADATSPFNV…EVARNARKLE (171 aa)) lie on the Cytoplasmic side of the membrane. A helical transmembrane segment spans residues 172 to 192 (FVGLGLSLVSLILAISIFSYF). At 193-205 (RRLRVFRNLLHLH) the chain is on the extracellular side. A helical transmembrane segment spans residues 206 to 226 (LMIAMLMVVILRLVLYIDLIF). Over 227-251 (TGENGPHTNSAEGKTINTMPIVCEG) the chain is Cytoplasmic. Residues 252 to 272 (MFFFLEYFKTVTFCWMFLEGI) traverse the membrane as a helical segment. At 273–292 (YLNNQIVFGFFNSEPKLLPY) the chain is on the extracellular side. A helical membrane pass occupies residues 293–313 (FIAGYGIPLVHTMLWLLVVLI). Over 314–333 (KKDFKVERCLGSYYLEPEFW) the chain is Cytoplasmic. The chain crosses the membrane as a helical span at residues 334 to 354 (ILDGPRMAELVINLFFICNVI). Over 355 to 377 (RVLYSKVRESNNTSEAGLKKSVK) the chain is Extracellular. N-linked (GlcNAc...) asparagine glycans are attached at residues Asn365 and Asn366. The helical transmembrane segment at 378 to 398 (AAMMLLPLLGVPNIMQTIPFA) threads the bilayer. Residues 399-403 (PTRDN) lie on the Cytoplasmic side of the membrane. A helical membrane pass occupies residues 404-424 (IMVFAVWTYTASFTYMYQGLM). The Extracellular segment spans residues 425-546 (VASIYCFTNK…EGSNRSTKSP (122 aa)). 2 N-linked (GlcNAc...) asparagine glycosylation sites follow: Asn472 and Asn476. The tract at residues 472–546 (NGTANASAPQ…EGSNRSTKSP (75 aa)) is disordered. Residues 473-485 (GTANASAPQTNNA) are compositionally biased toward polar residues. The segment covering 500-520 (KGSDDSTTKLMKDAVMEEEKN) has biased composition (basic and acidic residues). A glycan (N-linked (GlcNAc...) asparagine) is linked at Asn540.

The protein belongs to the G-protein coupled receptor 2 family. As to expression, expression was observed in the mechanosensory neuron pairs PLM, ALM, FLP, OLQD, and OLQV, the chemosensory neurons PHA, PHB, RMEV, the ring motor neurons RMED, and the pharyngeal interneuron pair I1. Expression in sensory neurons PHA, PQR and URY are responsible for mate searching behavior. Expressed in AIY, RIM, RIA, and other neurons.

The protein localises to the cell membrane. Functionally, G-protein coupled receptor for PDF neuropeptides. Plays a role in responses to environmental signals, including chemicals and touch, and in modulating locomotory behaviors. Capable of transducing signals via an adenylate cyclase acy-1 cAMP-dependent pathway. Required to regulate the sex-specific expression of TGFbeta-like daf-7 in the ASJ chemosensory neurons, perhaps acting via acy-1. Involved in modulating mate searching behavior independent of nutritional status. In the presence of food, plays a role in initiating and extending exploratory roaming behavior, perhaps acting in AIY, RIM, RIA, and other neurons, in opposition to 5-hydroxytryptamine (serotonin) signaling. Involved in mediating arousal from the sleep-like state called lethargus, which occurs during molting between larval and adult stages, in part by regulating touch sensitivity. May play a role in circadian rhythms of locomotor activity. G-protein coupled receptor which is activated by neuropeptides PDF-1 and PDF-2. Probably acts through the G-alpha(s) type of G proteins to elevate cAMP levels. Its function is as follows. G-protein coupled receptor which is activated by neuropeptides PDF-1 and PDF-2; however, activation is lower compared to isoforms a and b. Probably inhibits cAMP levels through the G-alpha(i/o) type of G proteins. The sequence is that of Calcitonin receptor-like protein 1 (pdfr-1) from Caenorhabditis elegans.